The following is a 366-amino-acid chain: Chorismate synthase (366 aa).

Arg-48 lines the NADP(+) pocket. FMN contacts are provided by residues 125–127 (RSS), 241–242 (NA), Gly-285, 300–304 (KPTSS), and Arg-326.

It belongs to the chorismate synthase family. Homotetramer. The cofactor is FMNH2.

The enzyme catalyses 5-O-(1-carboxyvinyl)-3-phosphoshikimate = chorismate + phosphate. The protein operates within metabolic intermediate biosynthesis; chorismate biosynthesis; chorismate from D-erythrose 4-phosphate and phosphoenolpyruvate: step 7/7. In terms of biological role, catalyzes the anti-1,4-elimination of the C-3 phosphate and the C-6 proR hydrogen from 5-enolpyruvylshikimate-3-phosphate (EPSP) to yield chorismate, which is the branch point compound that serves as the starting substrate for the three terminal pathways of aromatic amino acid biosynthesis. This reaction introduces a second double bond into the aromatic ring system. This chain is Chorismate synthase, found in Ruegeria pomeroyi (strain ATCC 700808 / DSM 15171 / DSS-3) (Silicibacter pomeroyi).